A 263-amino-acid polypeptide reads, in one-letter code: Protein phosphatase type 2A regulatory subunit RTS3 (263 aa).

2 disordered regions span residues 1–62 (MIAT…AQRR) and 149–176 (LPLT…ISNG). Low complexity predominate over residues 46 to 61 (LSTSSSPSSSPMSAQR). Phosphoserine is present on residues S172, S192, S214, and S238.

The protein resides in the cytoplasm. It is found in the nucleus. Functionally, may be a component of a protein phosphatase type 2A (PP2A) complex. Negatively regulates SIT4 phosphatase, a modulators of caffeine sensitivity. The polypeptide is Protein phosphatase type 2A regulatory subunit RTS3 (RTS3) (Saccharomyces cerevisiae (strain ATCC 204508 / S288c) (Baker's yeast)).